The chain runs to 463 residues: Phosphoglycerate transporter protein (463 aa).

At 1 to 29 (MLTILKTGQSAHKVPPEKVQATYGRYRIQ) the chain is on the cytoplasmic side. Helical transmembrane passes span 30–50 (ALLS…NFTL), 59–79 (LDLS…AYGI), 106–126 (IVNV…LVVF), 127–147 (NGLF…NWFP), 160–180 (ISHN…FAIL), 188–208 (ASYI…LVLG), 267–287 (VFVY…LLTV), 297–317 (VAFL…GWLS), 326–346 (MPLA…YWKS), 349–369 (LLMV…PQFL), 391–411 (GFMS…VMVD), and 413–433 (LGWY…ILFC).

It belongs to the major facilitator superfamily. Organophosphate:Pi antiporter (OPA) (TC 2.A.1.4) family.

The protein resides in the cell inner membrane. The phosphoglycerate transporter protein is a part of the PGT transport system. It is the membrane bound transporter for phosphoglycerate into salmonella. This chain is Phosphoglycerate transporter protein (pgtP), found in Salmonella typhimurium (strain LT2 / SGSC1412 / ATCC 700720).